A 131-amino-acid polypeptide reads, in one-letter code: Probable flagellum biosynthesis repressor protein FlbT (131 aa).

This sequence belongs to the FlbT family.

Its function is as follows. Has a post-transcriptional repressor function in flagellum biogenesis. Associates with the 5'-UTR of fljK mRNA and promotes its degradation. This is Probable flagellum biosynthesis repressor protein FlbT from Caulobacter sp. (strain K31).